A 116-amino-acid polypeptide reads, in one-letter code: Large ribosomal subunit protein bL17 (116 aa).

Belongs to the bacterial ribosomal protein bL17 family. Part of the 50S ribosomal subunit. Contacts protein L32.

In Synechococcus elongatus (strain ATCC 33912 / PCC 7942 / FACHB-805) (Anacystis nidulans R2), this protein is Large ribosomal subunit protein bL17.